Reading from the N-terminus, the 346-residue chain is Phosphate acyltransferase (346 aa).

The protein belongs to the PlsX family. As to quaternary structure, homodimer. Probably interacts with PlsY.

The protein localises to the cytoplasm. It carries out the reaction a fatty acyl-[ACP] + phosphate = an acyl phosphate + holo-[ACP]. It participates in lipid metabolism; phospholipid metabolism. In terms of biological role, catalyzes the reversible formation of acyl-phosphate (acyl-PO(4)) from acyl-[acyl-carrier-protein] (acyl-ACP). This enzyme utilizes acyl-ACP as fatty acyl donor, but not acyl-CoA. In Brucella melitensis biotype 2 (strain ATCC 23457), this protein is Phosphate acyltransferase.